The sequence spans 149 residues: FAD synthase (149 aa).

ATP contacts are provided by residues 9–10, 14–17, Asn92, and Tyr119; these read TF and HPGH.

This sequence belongs to the archaeal FAD synthase family. As to quaternary structure, homodimer. Requires a divalent metal cation as cofactor.

It catalyses the reaction FMN + ATP + H(+) = FAD + diphosphate. Its pathway is cofactor biosynthesis; FAD biosynthesis; FAD from FMN: step 1/1. Catalyzes the transfer of the AMP portion of ATP to flavin mononucleotide (FMN) to produce flavin adenine dinucleotide (FAD) coenzyme. The chain is FAD synthase from Methanoculleus marisnigri (strain ATCC 35101 / DSM 1498 / JR1).